Here is a 220-residue protein sequence, read N- to C-terminus: Adenylate kinase (220 aa).

10–15 (GAGKGT) is an ATP binding site. Residues 30 to 59 (STGDMLRAAVKAGSPLGVEAKGYMDAGKLV) form an NMP region. AMP contacts are provided by residues threonine 31, arginine 36, 57–59 (KLV), 85–88 (GFPR), and glutamine 92. The LID stretch occupies residues 122–159 (GRRTHPASGRTYHVKFNPPKVEGKDDVTGEPLIQRDDD). Residues arginine 123 and 132-133 (TY) contribute to the ATP site. Arginine 156 and arginine 167 together coordinate AMP. Glycine 206 contacts ATP.

It belongs to the adenylate kinase family. In terms of assembly, monomer.

It localises to the cytoplasm. The enzyme catalyses AMP + ATP = 2 ADP. Its pathway is purine metabolism; AMP biosynthesis via salvage pathway; AMP from ADP: step 1/1. In terms of biological role, catalyzes the reversible transfer of the terminal phosphate group between ATP and AMP. Plays an important role in cellular energy homeostasis and in adenine nucleotide metabolism. This Burkholderia ambifaria (strain ATCC BAA-244 / DSM 16087 / CCUG 44356 / LMG 19182 / AMMD) (Burkholderia cepacia (strain AMMD)) protein is Adenylate kinase.